Reading from the N-terminus, the 314-residue chain is Methionyl-tRNA formyltransferase (314 aa).

Residue 113–116 (SLLP) participates in (6S)-5,6,7,8-tetrahydrofolate binding.

This sequence belongs to the Fmt family.

It catalyses the reaction L-methionyl-tRNA(fMet) + (6R)-10-formyltetrahydrofolate = N-formyl-L-methionyl-tRNA(fMet) + (6S)-5,6,7,8-tetrahydrofolate + H(+). Functionally, attaches a formyl group to the free amino group of methionyl-tRNA(fMet). The formyl group appears to play a dual role in the initiator identity of N-formylmethionyl-tRNA by promoting its recognition by IF2 and preventing the misappropriation of this tRNA by the elongation apparatus. The sequence is that of Methionyl-tRNA formyltransferase from Ectopseudomonas mendocina (strain ymp) (Pseudomonas mendocina).